The sequence spans 1140 residues: Envelopment polyprotein (1140 aa).

An N-terminal signal peptide occupies residues methionine 1–alanine 17. The Lumenal segment spans residues glycine 18–threonine 489. Cystine bridges form between cysteine 30-cysteine 155, cysteine 64-cysteine 161, cysteine 113-cysteine 132, cysteine 137-cysteine 142, cysteine 179-cysteine 189, and cysteine 214-cysteine 251. Asparagine 138 carries N-linked (GlcNAc...) asparagine; by host glycosylation. Asparagine 351 is a glycosylation site (N-linked (GlcNAc...) asparagine; by host). Disulfide bonds link cysteine 380-cysteine 439, cysteine 384-cysteine 393, cysteine 409-cysteine 428, and cysteine 456-cysteine 479. Residue asparagine 403 is glycosylated (N-linked (GlcNAc...) asparagine; by host). The chain crosses the membrane as a helical span at residues alanine 490–leucine 510. Residues lysine 511 to cysteine 631 are Cytoplasmic-facing. Residues cysteine 520–lysine 537 form a binding to the ribonucleoprotein region. 2 consecutive CCHC-type zinc fingers follow at residues cysteine 549–cysteine 569 and cysteine 574–cysteine 595. Binding to the ribonucleoprotein stretches follow at residues phenylalanine 592–leucine 609, lysine 596–lysine 607, and lysine 615–serine 629. The segment at arginine 611–glycine 638 is interaction with host TRAF3. The ITAM domain maps to lysine 615 to glycine 638. 2 positions are modified to phosphotyrosine; by host: tyrosine 619 and tyrosine 632. The YxxL signature appears at tyrosine 619–leucine 622. A helical transmembrane segment spans residues tyrosine 632–alanine 652. Topologically, residues aspartate 653 to asparagine 1108 are lumenal. 8 cysteine pairs are disulfide-bonded: cysteine 739–cysteine 774, cysteine 743–cysteine 781, cysteine 755–cysteine 888, cysteine 769–cysteine 899, cysteine 784–cysteine 907, cysteine 810–cysteine 819, cysteine 827–cysteine 836, and cysteine 867–cysteine 871. Residues tyrosine 761 to cysteine 781 are fusion loop. Asparagine 931 carries N-linked (GlcNAc...) asparagine; by host glycosylation. 5 cysteine pairs are disulfide-bonded: cysteine 973/cysteine 1003, cysteine 996/cysteine 1048, cysteine 1013/cysteine 1018, cysteine 1049/cysteine 1054, and cysteine 1088/cysteine 1092. The chain crosses the membrane as a helical span at residues tryptophan 1109–phenylalanine 1129. The binding to the ribonucleoprotein stretch occupies residues leucine 1125–asparagine 1140. Residues cysteine 1130–asparagine 1140 are Cytoplasmic-facing.

This sequence belongs to the hantavirus envelope glycoprotein family. As to quaternary structure, homodimer. Homotetramer; forms heterotetrameric Gn-Gc spikes in the pre-fusion conformation. Interacts (via C-terminus) with the nucleoprotein. Interacts with host TUFM; this interaction contributes to the virus-induced degradation of mitochondria by autophagy, which leads to degradation of host MAVS and inhibition of type I interferon (IFN) responses. Interacts with host MAP1LC3B; this interaction contributes to the virus-induced degradation of mitochondria by autophagy, which leads to degradation of host MAVS and inhibition of type I interferon (IFN) responses. Interacts (via C-terminus) with host TRAF3 (via N-terminus); this interaction inhibits the formation of TRAF3-TBK1 complexes. In terms of assembly, homodimer. Homotetramer; forms heterotetrameric Gn-Gc spikes in the pre-fusion conformation. Homotrimer; forms homotrimer in the post-fusion conformation at acidic pH. Interacts (via C-terminus) with the nucleoprotein. Envelope polyprotein precursor is quickly cleaved in vivo just after synthesis, presumably by host signal peptidase.

The protein resides in the virion membrane. The protein localises to the host cell surface. Its subcellular location is the host Golgi apparatus membrane. It is found in the host endoplasmic reticulum membrane. It localises to the host mitochondrion. Functionally, forms homotetramers with glycoprotein C at the surface of the virion. Attaches the virion to host cell receptors including integrin ITGAV/ITGB3. This attachment induces virion internalization predominantly through clathrin-dependent endocytosis. Mediates the assembly and budding of infectious virus particles through its interaction with the nucleocapsid protein and the viral genome. May dysregulate normal immune and endothelial cell responses through an ITAM motif. Translocates to mitochondria, binds to host TUFM and recruits MAP1LC3B. These interactions induce mitochondrial autophagy and therefore destruction of host MAVS leading to inhibition of type I interferon (IFN) responses. Concomitant breakdown of glycoprotein N is apparently prevented by the nucleoprotein that may inhibit Gn-stimulated autophagosome-lysosome fusion. Interacts with the viral genomic RNA. Inhibits the host RIG-I/TBK1 pathway by disrupting the formation of TBK1-TRAF3 complexes and downstream signaling responses required for IFN-beta transcription. Its function is as follows. Forms homotetramers with glycoprotein N at the surface of the virion. Attaches the virion to host cell receptors including integrin ITGAV/ITGB3. This attachment induces virion internalization predominantly through clathrin-dependent endocytosis. Class II fusion protein that promotes fusion of viral membrane with host endosomal membrane after endocytosis of the virion. This chain is Envelopment polyprotein (GP), found in Homo sapiens (Human).